The following is a 37-amino-acid chain: Cytochrome b6-f complex subunit 5 (37 aa).

A helical membrane pass occupies residues Leu-5 to Ala-25.

The protein belongs to the PetG family. The 4 large subunits of the cytochrome b6-f complex are cytochrome b6, subunit IV (17 kDa polypeptide, PetD), cytochrome f and the Rieske protein, while the 4 small subunits are PetG, PetL, PetM and PetN. The complex functions as a dimer.

The protein localises to the plastid. Its subcellular location is the chloroplast thylakoid membrane. Functionally, component of the cytochrome b6-f complex, which mediates electron transfer between photosystem II (PSII) and photosystem I (PSI), cyclic electron flow around PSI, and state transitions. PetG is required for either the stability or assembly of the cytochrome b6-f complex. The protein is Cytochrome b6-f complex subunit 5 of Chlorella vulgaris (Green alga).